Consider the following 84-residue polypeptide: Putative movement protein (84 aa).

A helical transmembrane segment spans residues 15–35; sequence ALHGILVAFIAVLCLIGCLWA.

In terms of assembly, interacts with the capsid protein (CP). Part of a MP-CP-viral DNA complex.

The protein resides in the host membrane. Involved in the viral transport within, and between cells. The polypeptide is Putative movement protein (Miscanthus streak virus (isolate 91) (MiSV)).